A 423-amino-acid polypeptide reads, in one-letter code: Adenylosuccinate synthetase (423 aa).

GTP contacts are provided by residues 11-17 and 39-41; these read GDEGKGK and GHT. Catalysis depends on Asp-12, which acts as the Proton acceptor. Asp-12 and Gly-39 together coordinate Mg(2+). IMP-binding positions include 12–15, 37–40, Thr-127, Arg-141, Gln-223, Thr-238, and Arg-302; these read DEGK and NAGH. His-40 functions as the Proton donor in the catalytic mechanism. 298–304 serves as a coordination point for substrate; the sequence is TTTGRSR. GTP contacts are provided by residues Arg-304, 330 to 332, and 412 to 414; these read KLD and SVG.

This sequence belongs to the adenylosuccinate synthetase family. As to quaternary structure, homodimer. It depends on Mg(2+) as a cofactor.

The protein resides in the cytoplasm. The catalysed reaction is IMP + L-aspartate + GTP = N(6)-(1,2-dicarboxyethyl)-AMP + GDP + phosphate + 2 H(+). Its pathway is purine metabolism; AMP biosynthesis via de novo pathway; AMP from IMP: step 1/2. Its function is as follows. Plays an important role in the de novo pathway of purine nucleotide biosynthesis. Catalyzes the first committed step in the biosynthesis of AMP from IMP. The sequence is that of Adenylosuccinate synthetase from Methanococcoides burtonii (strain DSM 6242 / NBRC 107633 / OCM 468 / ACE-M).